A 194-amino-acid chain; its full sequence is Holliday junction branch migration complex subunit RuvA (194 aa).

Positions 1 to 64 (MISRLTGKLV…EDAHLLFGFA (64 aa)) are domain I. The tract at residues 65–143 (TAEERKTFRQ…AHTVTDGLFA (79 aa)) is domain II. The segment at 144–147 (AAPA) is flexible linker. The domain III stretch occupies residues 147–194 (AADETEDIVSTLLALGYSEREAKAAVKGVPEGTDVGEGVRLALKNLLK).

It belongs to the RuvA family. As to quaternary structure, homotetramer. Forms an RuvA(8)-RuvB(12)-Holliday junction (HJ) complex. HJ DNA is sandwiched between 2 RuvA tetramers; dsDNA enters through RuvA and exits via RuvB. An RuvB hexamer assembles on each DNA strand where it exits the tetramer. Each RuvB hexamer is contacted by two RuvA subunits (via domain III) on 2 adjacent RuvB subunits; this complex drives branch migration. In the full resolvosome a probable DNA-RuvA(4)-RuvB(12)-RuvC(2) complex forms which resolves the HJ.

The protein localises to the cytoplasm. Functionally, the RuvA-RuvB-RuvC complex processes Holliday junction (HJ) DNA during genetic recombination and DNA repair, while the RuvA-RuvB complex plays an important role in the rescue of blocked DNA replication forks via replication fork reversal (RFR). RuvA specifically binds to HJ cruciform DNA, conferring on it an open structure. The RuvB hexamer acts as an ATP-dependent pump, pulling dsDNA into and through the RuvAB complex. HJ branch migration allows RuvC to scan DNA until it finds its consensus sequence, where it cleaves and resolves the cruciform DNA. The protein is Holliday junction branch migration complex subunit RuvA of Neisseria meningitidis serogroup C (strain 053442).